The following is a 672-amino-acid chain: uncharacterized protein (672 aa).

The signal sequence occupies residues 1-24 (MKTLKTLKIFIIICIASVSLASFA). Helical transmembrane passes span 226–246 (IIGA…ALNK), 254–274 (IALF…LGPL), 410–430 (IILA…LYFI), 436–456 (CMIT…MALF), 469–489 (VCIS…LLIT), and 562–582 (VVSI…FYYF). The interval 626–672 (ASQGKPSVGDKPDVGGKRKEGEQQGGDSESGAGGGLADLASGSGGGK) is disordered. Residues 633 to 647 (VGDKPDVGGKRKEGE) show a composition bias toward basic and acidic residues. A compositionally biased stretch (gly residues) spans 656-672 (GAGGGLADLASGSGGGK).

Belongs to the TrbL/VirB6 family.

It is found in the cell membrane. This is an uncharacterized protein from Rickettsia felis (strain ATCC VR-1525 / URRWXCal2) (Rickettsia azadi).